The chain runs to 80 residues: Large ribosomal subunit protein uL29 (80 aa).

This sequence belongs to the universal ribosomal protein uL29 family.

In Mycobacterium marinum (strain ATCC BAA-535 / M), this protein is Large ribosomal subunit protein uL29.